The following is a 206-amino-acid chain: MARYLGPKLKLSRREGTDLFLKSGVRAIDTKCKIDNAPGVHGARRGRLSEYGVQLREKQKVRRIYGVLEKQFRNYYKEAARLKGNTGANLLQLLEGRLDNVVYRMGFGATRAESRQLVSHKSILVNGKVVNVPSFKVAANDVVSIREKAKQQSRIKAALEVAEQREKPTWIEVDAGKMEGTFKRMPERSDLSADINEHLIVELYSK.

In terms of domain architecture, S4 RNA-binding spans 96-158; that stretch reads GRLDNVVYRM…AKQQSRIKAA (63 aa).

It belongs to the universal ribosomal protein uS4 family. Part of the 30S ribosomal subunit. Contacts protein S5. The interaction surface between S4 and S5 is involved in control of translational fidelity.

In terms of biological role, one of the primary rRNA binding proteins, it binds directly to 16S rRNA where it nucleates assembly of the body of the 30S subunit. Functionally, with S5 and S12 plays an important role in translational accuracy. In Vibrio atlanticus (strain LGP32) (Vibrio splendidus (strain Mel32)), this protein is Small ribosomal subunit protein uS4.